Reading from the N-terminus, the 454-residue chain is Bifunctional protein GlmU (454 aa).

The pyrophosphorylase stretch occupies residues 1 to 227 (MSKLSVVILA…MMEVEGANNR (227 aa)). UDP-N-acetyl-alpha-D-glucosamine contacts are provided by residues 9-12 (LAAG), Lys-23, Gln-74, 79-80 (GT), 101-103 (YGD), Gly-138, Glu-152, Asn-167, and Asn-225. Position 103 (Asp-103) interacts with Mg(2+). Asn-225 provides a ligand contact to Mg(2+). The interval 228 to 248 (LQLAALERYFQRKQATALLLA) is linker. Positions 249–454 (GVSLADPERF…ADWERPSKKK (206 aa)) are N-acetyltransferase. UDP-N-acetyl-alpha-D-glucosamine-binding residues include Arg-331 and Lys-349. Catalysis depends on His-361, which acts as the Proton acceptor. Tyr-364 and Asn-375 together coordinate UDP-N-acetyl-alpha-D-glucosamine. Residues Ala-378, 384–385 (NY), Ser-403, Ala-421, and Arg-438 contribute to the acetyl-CoA site.

In the N-terminal section; belongs to the N-acetylglucosamine-1-phosphate uridyltransferase family. This sequence in the C-terminal section; belongs to the transferase hexapeptide repeat family. In terms of assembly, homotrimer. Mg(2+) is required as a cofactor.

Its subcellular location is the cytoplasm. It catalyses the reaction alpha-D-glucosamine 1-phosphate + acetyl-CoA = N-acetyl-alpha-D-glucosamine 1-phosphate + CoA + H(+). The enzyme catalyses N-acetyl-alpha-D-glucosamine 1-phosphate + UTP + H(+) = UDP-N-acetyl-alpha-D-glucosamine + diphosphate. The protein operates within nucleotide-sugar biosynthesis; UDP-N-acetyl-alpha-D-glucosamine biosynthesis; N-acetyl-alpha-D-glucosamine 1-phosphate from alpha-D-glucosamine 6-phosphate (route II): step 2/2. It participates in nucleotide-sugar biosynthesis; UDP-N-acetyl-alpha-D-glucosamine biosynthesis; UDP-N-acetyl-alpha-D-glucosamine from N-acetyl-alpha-D-glucosamine 1-phosphate: step 1/1. It functions in the pathway bacterial outer membrane biogenesis; LPS lipid A biosynthesis. In terms of biological role, catalyzes the last two sequential reactions in the de novo biosynthetic pathway for UDP-N-acetylglucosamine (UDP-GlcNAc). The C-terminal domain catalyzes the transfer of acetyl group from acetyl coenzyme A to glucosamine-1-phosphate (GlcN-1-P) to produce N-acetylglucosamine-1-phosphate (GlcNAc-1-P), which is converted into UDP-GlcNAc by the transfer of uridine 5-monophosphate (from uridine 5-triphosphate), a reaction catalyzed by the N-terminal domain. This is Bifunctional protein GlmU from Actinobacillus succinogenes (strain ATCC 55618 / DSM 22257 / CCUG 43843 / 130Z).